The primary structure comprises 540 residues: Putative rhamnogalacturonase (540 aa).

An N-terminal signal peptide occupies residues 1–23 (MGFLTLFHMAFLAVSLFVSGALA). 2 disulfides stabilise this stretch: C53–C100 and C192–C203. N89 carries N-linked (GlcNAc...) asparagine glycosylation. N-linked (GlcNAc...) asparagine glycosylation is present at N368.

The protein belongs to the polysaccharide lyase 4 family.

The protein localises to the secreted. The enzyme catalyses Endotype eliminative cleavage of L-alpha-rhamnopyranosyl-(1-&gt;4)-alpha-D-galactopyranosyluronic acid bonds of rhamnogalacturonan I domains in ramified hairy regions of pectin leaving L-rhamnopyranose at the reducing end and 4-deoxy-4,5-unsaturated D-galactopyranosyluronic acid at the non-reducing end.. In terms of biological role, could be a pectinolytic enzyme that hydrolyzes the alpha-L-rhamnopyranosyl-(1,4)-alpha-D-galacturonopyranosyl glycosidic linkage by beta-elimination, thereby generating oligosaccharides terminating at the non-reducing end with a hex-4-enopyranosyluronic acid residue. In Neurospora crassa (strain ATCC 24698 / 74-OR23-1A / CBS 708.71 / DSM 1257 / FGSC 987), this protein is Putative rhamnogalacturonase (asd-1).